The sequence spans 119 residues: Large ribosomal subunit protein bL20 (119 aa).

The protein belongs to the bacterial ribosomal protein bL20 family.

Its function is as follows. Binds directly to 23S ribosomal RNA and is necessary for the in vitro assembly process of the 50S ribosomal subunit. It is not involved in the protein synthesizing functions of that subunit. In Xanthomonas oryzae pv. oryzae (strain PXO99A), this protein is Large ribosomal subunit protein bL20.